The chain runs to 349 residues: GTPase Obg (349 aa).

Residues Met-1–Ile-159 form the Obg domain. In terms of domain architecture, OBG-type G spans Ala-160 to Gln-327. GTP contacts are provided by residues Gly-166–Ser-173, Phe-191–His-195, Asp-212–Gly-215, Ser-279–Asp-282, and Ser-308–Ala-310. Positions 173 and 193 each coordinate Mg(2+).

It belongs to the TRAFAC class OBG-HflX-like GTPase superfamily. OBG GTPase family. Monomer. Mg(2+) serves as cofactor.

The protein resides in the cytoplasm. Its function is as follows. An essential GTPase which binds GTP, GDP and possibly (p)ppGpp with moderate affinity, with high nucleotide exchange rates and a fairly low GTP hydrolysis rate. Plays a role in control of the cell cycle, stress response, ribosome biogenesis and in those bacteria that undergo differentiation, in morphogenesis control. This is GTPase Obg from Chelativorans sp. (strain BNC1).